The sequence spans 84 residues: Beta/gamma-crystallin (84 aa).

2 consecutive Beta/gamma crystallin 'Greek key' domains span residues 2-42 (GKII…IVES) and 43-84 (GTWF…VKQQ). The interval 64 to 84 (KYPNPGSWGGNDDELSSVKQQ) is disordered.

Belongs to the beta/gamma-crystallin family. Monomer. Palps of larvae and otolith of the light-sensing ocellus.

In terms of biological role, structural component of the neuroectodermal visual system. The protein is Beta/gamma-crystallin of Ciona intestinalis (Transparent sea squirt).